Reading from the N-terminus, the 227-residue chain is Protein FAM3C (227 aa).

The signal sequence occupies residues 1-24 (MRVAGAAKLVVAVAVFLLTFYVIS). 2 disulfide bridges follow: C58–C86 and C64–C221. In terms of domain architecture, GG-type lectin spans 67-225 (KHFAFKMASG…VEMEGCIPQK (159 aa)).

It belongs to the FAM3 family.

It localises to the secreted. Its subcellular location is the cytoplasmic vesicle. In terms of biological role, may be involved in retinal laminar formation. Promotes epithelial to mesenchymal transition. The chain is Protein FAM3C (FAM3C) from Bos taurus (Bovine).